Reading from the N-terminus, the 161-residue chain is N5-carboxyaminoimidazole ribonucleotide mutase (161 aa).

3 residues coordinate substrate: serine 9, aspartate 12, and arginine 39.

It belongs to the AIR carboxylase family. Class I subfamily.

It catalyses the reaction 5-carboxyamino-1-(5-phospho-D-ribosyl)imidazole + H(+) = 5-amino-1-(5-phospho-D-ribosyl)imidazole-4-carboxylate. Its pathway is purine metabolism; IMP biosynthesis via de novo pathway; 5-amino-1-(5-phospho-D-ribosyl)imidazole-4-carboxylate from 5-amino-1-(5-phospho-D-ribosyl)imidazole (N5-CAIR route): step 2/2. Functionally, catalyzes the conversion of N5-carboxyaminoimidazole ribonucleotide (N5-CAIR) to 4-carboxy-5-aminoimidazole ribonucleotide (CAIR). This is N5-carboxyaminoimidazole ribonucleotide mutase from Aliivibrio fischeri (strain ATCC 700601 / ES114) (Vibrio fischeri).